The sequence spans 289 residues: Pantothenate synthetase (289 aa).

M30–H37 serves as a coordination point for ATP. Catalysis depends on H37, which acts as the Proton donor. Residue Q61 participates in (R)-pantoate binding. Position 61 (Q61) interacts with beta-alanine. G147–D150 is an ATP binding site. Q153 provides a ligand contact to (R)-pantoate. ATP is bound by residues V176 and C184–R187.

It belongs to the pantothenate synthetase family. As to quaternary structure, homodimer.

The protein resides in the cytoplasm. The catalysed reaction is (R)-pantoate + beta-alanine + ATP = (R)-pantothenate + AMP + diphosphate + H(+). It participates in cofactor biosynthesis; (R)-pantothenate biosynthesis; (R)-pantothenate from (R)-pantoate and beta-alanine: step 1/1. Functionally, catalyzes the condensation of pantoate with beta-alanine in an ATP-dependent reaction via a pantoyl-adenylate intermediate. The polypeptide is Pantothenate synthetase (Allorhizobium ampelinum (strain ATCC BAA-846 / DSM 112012 / S4) (Agrobacterium vitis (strain S4))).